Consider the following 261-residue polypeptide: High-affinity zinc uptake system membrane protein ZnuB (261 aa).

The next 7 helical transmembrane spans lie at 8–28 (ALLT…FVVW), 54–74 (VNPY…MVWL), 84–104 (TLLG…VGLL), 125–145 (TDLI…IYFW), 171–191 (ILMI…GALI), 214–234 (VGWA…LSAF), and 236–256 (DTAA…LSLF).

Belongs to the ABC-3 integral membrane protein family.

Its subcellular location is the cell inner membrane. Involved in the high-affinity zinc uptake transport system. The polypeptide is High-affinity zinc uptake system membrane protein ZnuB (znuB) (Haemophilus influenzae (strain ATCC 51907 / DSM 11121 / KW20 / Rd)).